A 106-amino-acid polypeptide reads, in one-letter code: Trp operon repressor homolog (106 aa).

Residues 59 to 82 (QREIQQILNTSAATITRGSNMIKI) mediate DNA binding.

Belongs to the TrpR family. In terms of assembly, homodimer.

The protein resides in the cytoplasm. This protein is an aporepressor. When complexed with L-tryptophan it binds the operator region of the trp operon and prevents the initiation of transcription. The sequence is that of Trp operon repressor homolog from Histophilus somni (strain 129Pt) (Haemophilus somnus).